Consider the following 233-residue polypeptide: Large ribosomal subunit protein bL19c (233 aa).

Residues 1-77 constitute a chloroplast transit peptide; the sequence is MASKVLPQAL…FPARNSFVVR (77 aa).

In terms of assembly, component of the chloroplast large ribosomal subunit (LSU). Mature 70S chloroplast ribosomes of higher plants consist of a small (30S) and a large (50S) subunit. The 30S small subunit contains 1 molecule of ribosomal RNA (16S rRNA) and 24 different proteins. The 50S large subunit contains 3 rRNA molecules (23S, 5S and 4.5S rRNA) and 33 different proteins.

Its subcellular location is the plastid. It localises to the chloroplast. In terms of biological role, component of the chloroplast ribosome (chloro-ribosome), a dedicated translation machinery responsible for the synthesis of chloroplast genome-encoded proteins, including proteins of the transcription and translation machinery and components of the photosynthetic apparatus. This Spinacia oleracea (Spinach) protein is Large ribosomal subunit protein bL19c (RPL19).